The sequence spans 210 residues: Scoloptoxin SSD976 (210 aa).

Positions 1-23 are cleaved as a signal peptide; it reads MNILLSSTLFVLLMFQIIGSGMG.

In terms of processing, contains 3 disulfide bonds. Expressed by the venom gland.

The protein resides in the secreted. Voltage-gated calcium channel inhibitor. The protein is Scoloptoxin SSD976 of Scolopendra dehaani (Thai centipede).